The primary structure comprises 415 residues: Protein-lysine N-trimethyltransferase SMYD5 (415 aa).

The SET domain maps to 20–351; the sequence is NCVDVRFINN…PGEEICISYL (332 aa). The MYND-type zinc finger occupies 95–135; sequence PHPELCKVRPDRHQACPQCQVMYCSSECRQAAMDQYHKILC. Tyrosine 350 contributes to the S-adenosyl-L-methionine binding site. The disordered stretch occupies residues 388-415; sequence DMTSEDEEEVEGEGETEGEDMEDEMTDV.

The protein belongs to the class V-like SAM-binding methyltransferase superfamily. Expressed at high levels in the ovary and at lower levels in the fin, testis and brain.

The protein localises to the cytoplasm. The enzyme catalyses L-lysyl-[protein] + 3 S-adenosyl-L-methionine = N(6),N(6),N(6)-trimethyl-L-lysyl-[protein] + 3 S-adenosyl-L-homocysteine + 3 H(+). It catalyses the reaction L-lysyl(20)-[histone H4] + 3 S-adenosyl-L-methionine = N(6),N(6),N(6)-trimethyl-L-lysyl(20)-[histone H4] + 3 S-adenosyl-L-homocysteine + 3 H(+). It carries out the reaction L-lysyl(36)-[histone H3] + 3 S-adenosyl-L-methionine = N(6),N(6),N(6)-trimethyl-L-lysyl(36)-[histone H3] + 3 S-adenosyl-L-homocysteine + 3 H(+). Protein-lysine N-trimethyltransferase that specifically catalyzes trimethylation of 'Lys-22' of the RPL40/eL40 subunit of the 60S ribosome, thereby promoting translation elongation and protein synthesis. May also act as a histone methyltransferase in the context of histone octamers, but not on nucleosome substrates: trimethylates 'Lys-36' of histone H3 and 'Lys-20' of histone H4 to form H3K36me3 and H4K20me3, respectively. The histone methyltransferase activity, which is independent of its SET domain, is however unsure in vivo. Plays a crucial role in hematopoiesis during embryogenesis by negatively regulating expression of genes related to both primitive and definitive hematopoiesis. The protein is Protein-lysine N-trimethyltransferase SMYD5 of Danio rerio (Zebrafish).